Consider the following 128-residue polypeptide: Cytochrome c-type biogenesis protein CcmE (128 aa).

The Cytoplasmic portion of the chain corresponds to 1–8; that stretch reads MQKRVRNR. Residues 9–29 form a helical; Signal-anchor for type II membrane protein membrane-spanning segment; the sequence is LITIIICFCSAFLGIGIILYN. Residues 30–128 are Periplasmic-facing; that stretch reads LENNIVFFLP…KHDENYRPTR (99 aa). Heme contacts are provided by H120 and Y124.

Belongs to the CcmE/CycJ family.

It is found in the cell inner membrane. Functionally, heme chaperone required for the biogenesis of c-type cytochromes. Transiently binds heme delivered by CcmC and transfers the heme to apo-cytochromes in a process facilitated by CcmF and CcmH. This is Cytochrome c-type biogenesis protein CcmE from Rickettsia canadensis (strain McKiel).